The following is a 630-amino-acid chain: Lysophospholipase 3 (630 aa).

Positions Met1–Ala16 are cleaved as a signal peptide. Positions Ser39–Asp587 constitute a PLA2c domain. N-linked (GlcNAc...) asparagine glycans are attached at residues Asn56, Asn95, Asn164, Asn220, Asn283, Asn351, Asn390, Asn443, Asn456, Asn462, Asn493, Asn514, Asn542, Asn566, and Asn583. Asn606 carries GPI-like-anchor amidated asparagine lipidation. A propeptide spans Ala607 to Ala630 (removed in mature form).

It belongs to the lysophospholipase family. Post-translationally, the GPI-like anchor contains a phosphoceramide lipid group.

Its subcellular location is the cell membrane. The enzyme catalyses a 1-acyl-sn-glycero-3-phosphocholine + H2O = sn-glycerol 3-phosphocholine + a fatty acid + H(+). Its function is as follows. Catalyzes the release of fatty acids from lysophospholipids. This chain is Lysophospholipase 3 (plb3), found in Aspergillus fumigatus (strain CBS 144.89 / FGSC A1163 / CEA10) (Neosartorya fumigata).